Consider the following 540-residue polypeptide: CUB domain-containing protein 2 (540 aa).

A signal peptide spans 1-22 (MLAEWGACLLLAVALLGPGLQA). The Extracellular portion of the chain corresponds to 23–516 (QAMEGVKCGG…VSMVAQDTSD (494 aa)). Disulfide bonds link cysteine 30–cysteine 56, cysteine 83–cysteine 106, cysteine 145–cysteine 171, cysteine 198–cysteine 218, cysteine 257–cysteine 283, and cysteine 314–cysteine 336. CUB domains are found at residues 30-143 (CGGV…YQKD), 145-255 (CGGV…YFSG), and 257-373 (CQEV…YIGV). Asparagine 40 is a glycosylation site (N-linked (GlcNAc...) asparagine). N-linked (GlcNAc...) asparagine glycosylation is present at asparagine 267. 3 N-linked (GlcNAc...) asparagine glycosylation sites follow: asparagine 377, asparagine 435, and asparagine 436. A helical transmembrane segment spans residues 517–537 (IVFLGLCILAGILMVIAIVVL). Topologically, residues 538-540 (MLL) are cytoplasmic.

It is found in the membrane. This chain is CUB domain-containing protein 2 (CDCP2), found in Homo sapiens (Human).